Here is a 63-residue protein sequence, read N- to C-terminus: MKKSLQLSFSFLIISIILSHGMMADAQKKNCPHKIPIKGSYCAPTICLDMCKKQHGTVGSCAE.

Pollen specific.

The sequence is that of Protein BP4A (BP4A) from Brassica napus (Rape).